Reading from the N-terminus, the 218-residue chain is MSQTAMSETYDFLFKFLVIGNAGTGKSCLLHQFIEKKFKDDSNHTIGVEFGSKIINVGGKYVKLQIWDTAGQERFRSVTRSYYRGAAGALLVYDITSRETYNALTNWLTDARMLASQNIVIILCGNKKDLDTDREVTFLEASRFAQENELMFLETSALTGENVEEAFVQCARKILNKIESGELDPERMGSGIQYGDAALRQLRSPRRAQAPSAQECGC.

Residues Gly23, Thr24, Gly25, Lys26, Ser27, Cys28, Ser42, His44, and Thr45 each coordinate GTP. Position 27 (Ser27) interacts with Mg(2+). The short motif at 44–49 (HTIGVE) is the Switch 1 element. Residues Thr45 and Asp68 each coordinate Mg(2+). Residues 70–79 (AGQERFRSVT) carry the Switch 2 motif. Gly71 is a GTP binding site. Residue Gln72 is modified to 5-glutamyl serotonin. Asn126, Lys127, Asp129, Ala157, and Leu158 together coordinate GTP. Ser190 is modified (phosphoserine). At Ser204 the chain carries Phosphoserine; by CDK1. Residues Cys216 and Cys218 are each lipidated (S-geranylgeranyl cysteine). Cysteine methyl ester is present on Cys218.

Belongs to the small GTPase superfamily. Rab family. In terms of assembly, interacts with RAB11FIP1, RABEP1, ZFYVE20 and RUFY1. Interacts with SGSM1, SGSM2 and SGSM3. Interacts (membrane-bound form) with NDRG1; the interaction involves NDRG1 in vesicular recycling of E-cadherin. Interacts (in GTP-bound form) with GRIPAP1. Interacts with RABEP1 and RBSN. Does not interact with HPS4. It depends on Mg(2+) as a cofactor. Post-translationally, serotonylation of Gln-72 by TGM2 during activation and aggregation of platelets leads to constitutive activation of GTPase activity. In terms of processing, phosphorylated by CDK1 kinase during mitosis.

It is found in the membrane. The protein localises to the cytoplasm. It localises to the early endosome membrane. Its subcellular location is the recycling endosome membrane. The enzyme catalyses GTP + H2O = GDP + phosphate + H(+). With respect to regulation, regulated by guanine nucleotide exchange factors (GEFs) which promote the exchange of bound GDP for free GTP. Regulated by GTPase activating proteins (GAPs) which increase the GTP hydrolysis activity. Inhibited by GDP dissociation inhibitors (GDIs). In terms of biological role, the small GTPases Rab are key regulators of intracellular membrane trafficking, from the formation of transport vesicles to their fusion with membranes. Rabs cycle between an inactive GDP-bound form and an active GTP-bound form that is able to recruit to membranes different sets of downstream effectors directly responsible for vesicle formation, movement, tethering and fusion. RAB4A is involved in protein transport. Also plays a role in vesicular traffic. Mediates VEGFR2 endosomal trafficking to enhance VEGFR2 signaling. Acts as a regulator of platelet alpha-granule release during activation and aggregation of platelets. The polypeptide is Ras-related protein Rab-4A (RAB4A) (Bos taurus (Bovine)).